The following is a 141-amino-acid chain: uncharacterized protein (141 aa).

Residues 8–112 form the MaoC-like domain; it reads IGQVFKTKSL…VLDKQPKRNE (105 aa).

This is an uncharacterized protein from Bacillus subtilis (strain 168).